Here is a 463-residue protein sequence, read N- to C-terminus: Golgi-associated PDZ and coiled-coil motif-containing protein (463 aa).

An N-acetylserine modification is found at Ser2. Residues Ala85–Val201 adopt a coiled-coil conformation. The PDZ domain maps to Lys289–Ala372. Phosphoserine is present on residues Ser402 and Ser405.

Homooligomer. Interacts with FZD5. Interacts with FZD8. Interacts with GRID2 and BECN1. Interacts with CSPG5. Interacts with CLCN3. Interacts with STX6. Interacts with CFTR. Interacts with ASIC3. Interacts with GOLGA3. Interacts with NLGN1. Interacts with RHOQ. Interacts with MARCHF2; the interaction leads to CFTR ubiquitination and degradation. May interact with CACNG2. Interacts with CCDC62. As to expression, ubiquitously expressed (at protein level). Expressed in dorsal root glanglion (DRG), spinal cord and brain. Isoform 1 is preferentially expressed in whole brain (at protein level) and cerebellum. Expressed in spermatocytes and spermatides but not in Sertoli cells and spermatogonia.

Its subcellular location is the cytoplasm. It is found in the golgi apparatus membrane. The protein localises to the golgi apparatus. The protein resides in the trans-Golgi network membrane. It localises to the synapse. Its subcellular location is the postsynaptic density. It is found in the cell projection. The protein localises to the dendrite. Functionally, plays a role in intracellular protein trafficking and degradation. May regulate CFTR chloride currents and acid-induced ASIC3 currents by modulating cell surface expression of both channels. May also regulate the intracellular trafficking of the ADR1B receptor. May play a role in autophagy. Together with MARCHF2 mediates the ubiquitination and lysosomal degradation of CFTR. Overexpression results in CFTR intracellular retention and degradation in the lysosomes. This Mus musculus (Mouse) protein is Golgi-associated PDZ and coiled-coil motif-containing protein.